Consider the following 396-residue polypeptide: Putative nickel insertion protein (396 aa).

Belongs to the LarC family.

This is Putative nickel insertion protein from Methanosarcina barkeri (strain Fusaro / DSM 804).